The sequence spans 134 residues: Aspartate 1-decarboxylase (134 aa).

The active-site Schiff-base intermediate with substrate; via pyruvic acid is the Ser25. Ser25 carries the post-translational modification Pyruvic acid (Ser). Substrate is bound at residue Thr57. The active-site Proton donor is the Tyr58. Substrate is bound at residue 73–75 (GAA).

The protein belongs to the PanD family. In terms of assembly, heterooctamer of four alpha and four beta subunits. Requires pyruvate as cofactor. Post-translationally, is synthesized initially as an inactive proenzyme, which is activated by self-cleavage at a specific serine bond to produce a beta-subunit with a hydroxyl group at its C-terminus and an alpha-subunit with a pyruvoyl group at its N-terminus.

The protein resides in the cytoplasm. It catalyses the reaction L-aspartate + H(+) = beta-alanine + CO2. The protein operates within cofactor biosynthesis; (R)-pantothenate biosynthesis; beta-alanine from L-aspartate: step 1/1. Catalyzes the pyruvoyl-dependent decarboxylation of aspartate to produce beta-alanine. In Geobacter sp. (strain M21), this protein is Aspartate 1-decarboxylase.